Reading from the N-terminus, the 100-residue chain is UPF0213 protein YhbQ (100 aa).

The GIY-YIG domain occupies T2–R77.

This sequence belongs to the UPF0213 family.

This Salmonella choleraesuis (strain SC-B67) protein is UPF0213 protein YhbQ.